The primary structure comprises 227 residues: Ribosomal RNA large subunit methyltransferase E (227 aa).

5 residues coordinate S-adenosyl-L-methionine: glycine 78, tryptophan 80, aspartate 103, aspartate 119, and aspartate 143. Residue lysine 183 is the Proton acceptor of the active site.

Belongs to the class I-like SAM-binding methyltransferase superfamily. RNA methyltransferase RlmE family.

It is found in the cytoplasm. It carries out the reaction uridine(2552) in 23S rRNA + S-adenosyl-L-methionine = 2'-O-methyluridine(2552) in 23S rRNA + S-adenosyl-L-homocysteine + H(+). Specifically methylates the uridine in position 2552 of 23S rRNA at the 2'-O position of the ribose in the fully assembled 50S ribosomal subunit. The sequence is that of Ribosomal RNA large subunit methyltransferase E from Rickettsia akari (strain Hartford).